The chain runs to 308 residues: tRNA dimethylallyltransferase (308 aa).

Residue 8-15 participates in ATP binding; sequence GATAVGKT. 10–15 is a substrate binding site; that stretch reads TAVGKT. Positions 33 to 36 are interaction with substrate tRNA; the sequence is DSRQ.

The protein belongs to the IPP transferase family. In terms of assembly, monomer. Mg(2+) is required as a cofactor.

It carries out the reaction adenosine(37) in tRNA + dimethylallyl diphosphate = N(6)-dimethylallyladenosine(37) in tRNA + diphosphate. Functionally, catalyzes the transfer of a dimethylallyl group onto the adenine at position 37 in tRNAs that read codons beginning with uridine, leading to the formation of N6-(dimethylallyl)adenosine (i(6)A). The sequence is that of tRNA dimethylallyltransferase from Kosmotoga olearia (strain ATCC BAA-1733 / DSM 21960 / TBF 19.5.1).